The primary structure comprises 485 residues: GlcNAc-binding protein A (485 aa).

A signal peptide spans 1–23 (MKKQPKMTAIALILSGISGLAYG). Residues 24–201 (HGYVSAVENG…SFYNVIDVKF (178 aa)) enclose the Chitin-binding type-4 domain. The 42-residue stretch at 437–478 (AGTKVLASDGAIYQCKPWPYSGYCQQWTSNATQYQPGTGSHW) folds into the Chitin-binding type-3 domain.

The protein belongs to the GbpA family.

The protein resides in the secreted. Probably interacts with GlcNAc residues. May promote attachment to both epithelial cell surfaces and chitin. The polypeptide is GlcNAc-binding protein A (Vibrio cholerae serotype O1 (strain ATCC 39541 / Classical Ogawa 395 / O395)).